The sequence spans 183 residues: Hypoxanthine-guanine phosphoribosyltransferase (183 aa).

Residues R47 and G48 each contribute to the diphosphate site. Residues E103 and D104 each coordinate Mg(2+). D107 (proton acceptor) is an active-site residue. Residues K134, 155 to 156 (FV), and D162 contribute to the GMP site. R168 is a binding site for diphosphate.

It belongs to the purine/pyrimidine phosphoribosyltransferase family. It depends on Mg(2+) as a cofactor.

It is found in the cytoplasm. The enzyme catalyses IMP + diphosphate = hypoxanthine + 5-phospho-alpha-D-ribose 1-diphosphate. It carries out the reaction GMP + diphosphate = guanine + 5-phospho-alpha-D-ribose 1-diphosphate. Its pathway is purine metabolism; IMP biosynthesis via salvage pathway; IMP from hypoxanthine: step 1/1. It participates in purine metabolism; GMP biosynthesis via salvage pathway; GMP from guanine: step 1/1. In terms of biological role, purine salvage pathway enzyme that catalyzes the transfer of the ribosyl-5-phosphate group from 5-phospho-alpha-D-ribose 1-diphosphate (PRPP) to the N9 position of the 6-oxopurines hypoxanthine and guanine to form the corresponding ribonucleotides IMP (inosine 5'-monophosphate) and GMP (guanosine 5'-monophosphate), with the release of PPi. The sequence is that of Hypoxanthine-guanine phosphoribosyltransferase (hpt) from Lactococcus lactis subsp. lactis (strain IL1403) (Streptococcus lactis).